Here is a 509-residue protein sequence, read N- to C-terminus: ATP synthase subunit alpha (509 aa).

ATP is bound at residue 169-176 (GDRQTGKT).

It belongs to the ATPase alpha/beta chains family. As to quaternary structure, F-type ATPases have 2 components, CF(1) - the catalytic core - and CF(0) - the membrane proton channel. CF(1) has five subunits: alpha(3), beta(3), gamma(1), delta(1), epsilon(1). CF(0) has four main subunits: a(1), b(1), b'(1) and c(9-12).

It is found in the cellular chromatophore membrane. The enzyme catalyses ATP + H2O + 4 H(+)(in) = ADP + phosphate + 5 H(+)(out). Its function is as follows. Produces ATP from ADP in the presence of a proton gradient across the membrane. The alpha chain is a regulatory subunit. The polypeptide is ATP synthase subunit alpha (Rhodobacter capsulatus (Rhodopseudomonas capsulata)).